The chain runs to 133 residues: Transmembrane protein 60 (133 aa).

4 helical membrane passes run 5–25, 35–55, 78–98, and 110–130; these read LAQR…MLVL, WFLI…LLIV, AWYL…CAKL, and FIPL…NVFF.

Its subcellular location is the membrane. The chain is Transmembrane protein 60 (TMEM60) from Homo sapiens (Human).